Reading from the N-terminus, the 327-residue chain is Replication factor C small subunit (327 aa).

Position 47 to 54 (47 to 54 (GPPGTGKT)) interacts with ATP.

It belongs to the activator 1 small subunits family. RfcS subfamily. Heteromultimer composed of small subunits (RfcS) and large subunits (RfcL).

In terms of biological role, part of the RFC clamp loader complex which loads the PCNA sliding clamp onto DNA. This Sulfurisphaera tokodaii (strain DSM 16993 / JCM 10545 / NBRC 100140 / 7) (Sulfolobus tokodaii) protein is Replication factor C small subunit.